The chain runs to 595 residues: Chaperone protein HscA homolog (595 aa).

It belongs to the heat shock protein 70 family.

In terms of biological role, chaperone involved in the maturation of iron-sulfur cluster-containing proteins. Has a low intrinsic ATPase activity which is markedly stimulated by HscB. In Rickettsia africae (strain ESF-5), this protein is Chaperone protein HscA homolog.